Reading from the N-terminus, the 107-residue chain is Flagellar transcriptional regulator FlhD (107 aa).

The protein belongs to the FlhD family. Homodimer; disulfide-linked. Forms a heterohexamer composed of two FlhC and four FlhD subunits. Each FlhC binds a FlhD dimer, forming a heterotrimer, and a hexamer assembles by dimerization of two heterotrimers.

It is found in the cytoplasm. Functionally, functions in complex with FlhC as a master transcriptional regulator that regulates transcription of several flagellar and non-flagellar operons by binding to their promoter region. Activates expression of class 2 flagellar genes, including fliA, which is a flagellum-specific sigma factor that turns on the class 3 genes. Also regulates genes whose products function in a variety of physiological pathways. This is Flagellar transcriptional regulator FlhD from Bordetella pertussis (strain Tohama I / ATCC BAA-589 / NCTC 13251).